We begin with the raw amino-acid sequence, 1135 residues long: Potassium channel subfamily T member 2 (1135 aa).

The Cytoplasmic segment spans residues 1–63; that stretch reads MVDLESEVPP…KNQRSSLRIR (63 aa). Residues 64–84 traverse the membrane as a helical segment; that stretch reads LFNFSLKLLSCLLYIIRVLLE. Topologically, residues 85-101 are extracellular; the sequence is KPSQGSEWSHIFWVNRS. The chain crosses the membrane as a helical span at residues 102–122; the sequence is LPLWGLQVSVALISLFETILL. The Cytoplasmic portion of the chain corresponds to 123–137; that stretch reads GYLSYKGNIWEQILR. The chain crosses the membrane as a helical span at residues 138-158; sequence IPFILEIINAVPFIISIFWPT. At 159–164 the chain is on the extracellular side; sequence LRNLFV. A helical membrane pass occupies residues 165–185; it reads PVFLNCWLAKHALENMINDLH. The Cytoplasmic portion of the chain corresponds to 186–198; the sequence is RAIQRTQSAMFNQ. A helical membrane pass occupies residues 199–219; the sequence is VLILISTLLCLIFTCICGIQH. Residues 220 to 228 are Extracellular-facing; it reads LERIGKKLN. The segment at residues 229-249 is an intramembrane region (pore-forming); that stretch reads LFDSLYFCIVTFSTVGFGDVT. Residues 250-256 lie on the Extracellular side of the membrane; sequence PETWSSK. The helical transmembrane segment at 257 to 277 threads the bilayer; it reads LFVVAMICVALVVLPIQFEQL. Residues 278–1135 lie on the Cytoplasmic side of the membrane; sequence AYLWMERQKS…VQDSREETQL (858 aa). 2 RCK N-terminal domains span residues 299 to 435 and 718 to 858; these read EKHV…DHVV and NKLI…CYSL. Disordered regions lie at residues 982–1036 and 1111–1135; these read DTKD…AEKI and PNSEPSRKNSICNAAVQDSREETQL. Positions 1010–1030 are enriched in basic residues; sequence LRRKSMQWARRLSRKGPKHSG. The segment covering 1111–1122 has biased composition (polar residues); sequence PNSEPSRKNSIC.

It belongs to the potassium channel family. Calcium-activated (TC 1.A.1.3) subfamily. KCa4.2/KCNT2 sub-subfamily. As to quaternary structure, homotetramer. Forms heteromeric channels with KCNT1. These heterodimer channels differ from the homomers in their unitary conductance, kinetic behavior, subcellular localization, and response to activation of protein kinase C. In terms of processing, phosphorylated by protein kinase C. Phosphorylation of the C-terminal domain inhibits channel activity. In terms of tissue distribution, within the dorsal root ganglia (DRGs), exclusively expressed in small-sized and medium-sized calcitonin gene-related peptide (CGRP)-containing DRG neurons.

Its subcellular location is the cell membrane. It carries out the reaction K(+)(in) = K(+)(out). Its activity is regulated as follows. Are normally in a closed state unless activated by an increase in intracellular Na(+) and Cl(-). Inhibited upon stimulation of G-protein coupled receptors, such as CHRM1 and GRM1. There is conflicting data about the effect of ATP on KNCT2 channels activity. Intracellular ATP was initially report to inhibit the channel activity. However, others studies conclude that KNCT2 channels are not inhibited by intracellular ATP. Its function is as follows. Sodium-activated and chloride-activated potassium channel. Produces rapidly activating outward rectifier K(+) currents. Contributes to regulate neuronal excitability. The chain is Potassium channel subfamily T member 2 (Kcnt2) from Mus musculus (Mouse).